A 157-amino-acid chain; its full sequence is Transcriptional regulator MraZ (157 aa).

2 consecutive SpoVT-AbrB domains span residues 7 to 52 (TYTM…AGGN) and 83 to 126 (SETL…EPER).

Belongs to the MraZ family. In terms of assembly, forms oligomers.

The protein resides in the cytoplasm. Its subcellular location is the nucleoid. This is Transcriptional regulator MraZ from Xanthobacter autotrophicus (strain ATCC BAA-1158 / Py2).